Reading from the N-terminus, the 411-residue chain is Solute carrier RCH1 (411 aa).

At 1-17 (MSLETFRESKAYKWTSK) the chain is on the cytoplasmic side. A helical membrane pass occupies residues 18-38 (VISFLIGQWFFIFLGVFIALA). The Extracellular segment spans residues 39 to 52 (HSYPEFAKQGGTIR). The helical transmembrane segment at 53-73 (AEYSIGYGAVAVIFLISGLSM) threads the bilayer. Topologically, residues 74 to 89 (STKQLLVNVANWRAHF) are cytoplasmic. A helical transmembrane segment spans residues 90–110 (TVLSMSFLVTSAIIYGIASGI). Residues 111-120 (KASHNGQIDD) lie on the Extracellular side of the membrane. A helical membrane pass occupies residues 121–141 (WLLIGLIVTHACPTTVSSNVV). The Cytoplasmic portion of the chain corresponds to 142-150 (MTKQAHGND). A helical transmembrane segment spans residues 151–171 (ILTLCEVFIGNVLGAFITPAL). Topologically, residues 172–204 (LQMYMRGTWEIGNPSHQTQGDSTVQELYAHTMK) are extracellular. A helical transmembrane segment spans residues 205-225 (QLGLSVFVPLFVGQVVQNIFP). Over 226 to 242 (KQTKWCLTTFKLNKVGS) the chain is Cytoplasmic. A helical membrane pass occupies residues 243-263 (FMLLLIMFQSFSTAFAQHAFT). Residues 264 to 269 (SVSHAS) are Extracellular-facing. The helical transmembrane segment at 270–290 (IIFLVFFNIGIYLFFTVLTFF) threads the bilayer. Residues 291–329 (YSRPFWILRVFKEEPNESSSKLYRYSYAFFRPFYYNRKD) lie on the Cytoplasmic side of the membrane. Residues 330–350 (TVAVMLCGPAKTAALGVSLVS) form a helical membrane-spanning segment. Residues 351-361 (SQYGSHNPKLG) are Extracellular-facing. Residues 362 to 382 (IILVPLVLYQAEQVMTANVLV) form a helical membrane-spanning segment. At 383-411 (SFMRKWIHAEDKVPEDEETSVGSDNDPKK) the chain is on the cytoplasmic side.

This sequence belongs to the bile acid:sodium symporter (BASS) (TC 2.A.28) family.

Its subcellular location is the cell membrane. It localises to the bud neck. Functionally, solute carrier protein that negatively regulates the cytosolic homeostasis in response to high levels of extracellular calcium. In Candida albicans (strain SC5314 / ATCC MYA-2876) (Yeast), this protein is Solute carrier RCH1.